The primary structure comprises 54 residues: Large ribosomal subunit protein uL15 (54 aa).

Basic residues predominate over residues 1–30 (MPSRLRXTRKLRGHVSHGHGRIGKHRKHPG). Residues 1–42 (MPSRLRXTRKLRGHVSHGHGRIGKHRKHPGGRGNAGGMHHHR) are disordered. (3S)-3-hydroxyhistidine is present on His39. Residue Lys47 is modified to N6-acetyllysine.

This sequence belongs to the universal ribosomal protein uL15 family. Component of the large ribosomal subunit. In terms of processing, hydroxylated on His-39 by MINA.

The protein localises to the cytoplasm. Component of the large ribosomal subunit. The ribosome is a large ribonucleoprotein complex responsible for the synthesis of proteins in the cell. This Sus scrofa (Pig) protein is Large ribosomal subunit protein uL15 (RPL27A).